The chain runs to 204 residues: LexA repressor (204 aa).

The H-T-H motif DNA-binding region spans 28–48 (VREIGQAVGLASSSTVHGHLS). Active-site for autocatalytic cleavage activity residues include Ser-126 and Lys-164.

It belongs to the peptidase S24 family. As to quaternary structure, homodimer.

The catalysed reaction is Hydrolysis of Ala-|-Gly bond in repressor LexA.. Functionally, represses a number of genes involved in the response to DNA damage (SOS response), including recA and lexA. In the presence of single-stranded DNA, RecA interacts with LexA causing an autocatalytic cleavage which disrupts the DNA-binding part of LexA, leading to derepression of the SOS regulon and eventually DNA repair. The protein is LexA repressor of Bacillus mycoides (strain KBAB4) (Bacillus weihenstephanensis).